The primary structure comprises 890 residues: Probable LRR receptor-like serine/threonine-protein kinase At1g51860 (890 aa).

The N-terminal stretch at 1 to 23 (MKSLHWFLHLLIIAFTVLRSVEA) is a signal peptide. At 24–513 (QNQAGFISLD…KESKKVPMVA (490 aa)) the chain is on the extracellular side. 13 N-linked (GlcNAc...) asparagine glycosylation sites follow: N49, N96, N142, N181, N256, N285, N289, N295, N312, N332, N340, N402, and N419. LRR repeat units follow at residues 412–435 (RIISLNLNGSELTGSITSDISKLT), 436–458 (LLTVLDLSNNDLSGDIPTFFAEM), and 460–481 (SLKLINLSGNPNLNLTAIPDSL). N465, N473, and N497 each carry an N-linked (GlcNAc...) asparagine glycan. A helical membrane pass occupies residues 514–534 (IAASVAGVFALLVILAIFFVI). Topologically, residues 535 to 890 (KRKNVKAHKS…STSDFAPGAR (356 aa)) are cytoplasmic. At T575 the chain carries Phosphothreonine. The Protein kinase domain occupies 584 to 856 (NNFERVLGKG…HVVMELNDCV (273 aa)). ATP contacts are provided by residues 590–598 (LGKGGFGTV) and K611. A Phosphotyrosine modification is found at Y656. The Proton acceptor role is filled by D708. A Phosphoserine modification is found at S742. Phosphothreonine is present on residues T743 and T748. At Y756 the chain carries Phosphotyrosine.

It belongs to the protein kinase superfamily. Ser/Thr protein kinase family.

The protein localises to the membrane. The enzyme catalyses L-seryl-[protein] + ATP = O-phospho-L-seryl-[protein] + ADP + H(+). It carries out the reaction L-threonyl-[protein] + ATP = O-phospho-L-threonyl-[protein] + ADP + H(+). This is Probable LRR receptor-like serine/threonine-protein kinase At1g51860 from Arabidopsis thaliana (Mouse-ear cress).